The primary structure comprises 394 residues: MTNIIRQFLRQEAAGGLILIIAAAIALLMANSALQGVYQSFLDIPVSIKIASLDISKPLLLWINDGLMAVFFLMIGLEVKRELMEGSLAGRDKAVFPAIAALGGMLAPALIYLLFNGADEVTRQGWAIPAATDIAFALGVMALLGNRVPTGLKVFLLALAIIDDLGVIIIIALFYTQQVSLQSLGIAAAAIALLAYMNWRGVGKTSAYLLVGLVLWVCILKSGVHATLAGVIVGFMIPLHTQDQRSPSESLEHGLHPWVAYLILPLFAFANAGVSLQGVSLSGLTSLLPMGIATGLFIGKPLGIFTFSWLAVKLGIAKLPDAINFKQIFAVSVLCGIGFTMSIFIASLAFEGTDIALTTYSKLGILLGSTTAAVVGYSLLRLVLPAWRKAVNVR.

Transmembrane regions (helical) follow at residues 14-34 (AGGL…NSAL), 59-79 (LLLW…GLEV), 95-115 (VFPA…YLLF), 125-145 (GWAI…ALLG), 154-174 (VFLL…IALF), 179-199 (VSLQ…YMNW), 213-233 (LVLW…GVIV), 254-274 (GLHP…NAGV), 292-312 (IATG…WLAV), 328-348 (IFAV…IASL), and 363-383 (LGIL…LRLV).

This sequence belongs to the NhaA Na(+)/H(+) (TC 2.A.33) antiporter family.

The protein resides in the cell inner membrane. It catalyses the reaction Na(+)(in) + 2 H(+)(out) = Na(+)(out) + 2 H(+)(in). Its function is as follows. Na(+)/H(+) antiporter that extrudes sodium in exchange for external protons. This Yersinia pestis bv. Antiqua (strain Angola) protein is Na(+)/H(+) antiporter NhaA.